The chain runs to 429 residues: D-galactonate dehydratase family member Caci_4410 (429 aa).

Positions 1–22 (MTDANHLLDPSGALPQTRPPWT) are disordered. Asp-233 is a Mg(2+) binding site. His-235 contributes to the D-arabinonate binding site. Residues Glu-259 and Glu-285 each contribute to the Mg(2+) site. Glu-285, Arg-306, His-335, and Glu-362 together coordinate D-arabinonate.

This sequence belongs to the mandelate racemase/muconate lactonizing enzyme family. GalD subfamily.

In terms of biological role, has no detectable activity with D-mannonate and with a panel of 70 other acid sugars (in vitro), in spite of the conservation of the residues that are expected to be important for catalytic activity and cofactor binding. May have evolved a divergent function. This chain is D-galactonate dehydratase family member Caci_4410, found in Catenulispora acidiphila (strain DSM 44928 / JCM 14897 / NBRC 102108 / NRRL B-24433 / ID139908).